Reading from the N-terminus, the 199-residue chain is Putative acetyltransferase SAR2635 (199 aa).

Belongs to the transferase hexapeptide repeat family.

This Staphylococcus aureus (strain MRSA252) protein is Putative acetyltransferase SAR2635.